We begin with the raw amino-acid sequence, 158 residues long: Eukaryotic translation initiation factor 5A (158 aa).

Position 51 is a hypusine (lysine 51).

The protein belongs to the eIF-5A family. In terms of processing, lys-51 undergoes hypusination, a unique post-translational modification that consists in the addition of a butylamino group from spermidine to lysine side chain, leading to the formation of the unusual amino acid hypusine. eIF-5As are the only known proteins to undergo this modification, which is essential for their function.

It localises to the cytoplasm. Its function is as follows. Translation factor that promotes translation elongation and termination, particularly upon ribosome stalling at specific amino acid sequence contexts. Binds between the exit (E) and peptidyl (P) site of the ribosome and promotes rescue of stalled ribosome: specifically required for efficient translation of polyproline-containing peptides as well as other motifs that stall the ribosome. Acts as a ribosome quality control (RQC) cofactor by joining the RQC complex to facilitate peptidyl transfer during CAT tailing step. This is Eukaryotic translation initiation factor 5A (ANB1) from Candida albicans (strain SC5314 / ATCC MYA-2876) (Yeast).